A 198-amino-acid polypeptide reads, in one-letter code: Inosine triphosphate pyrophosphatase (198 aa).

At Ala2 the chain carries N-acetylalanine. 14-19 lines the ITP pocket; that stretch reads TGNAKK. Glu44 is a Mg(2+) binding site. ITP contacts are provided by residues Lys56, 72–73, and Lys89; that span reads DT. The residue at position 146 (Ser146) is a Phosphoserine. ITP is bound by residues 149–152, Lys172, and 177–178; these read FGWD and HR.

It belongs to the HAM1 NTPase family. In terms of assembly, homodimer. Mg(2+) is required as a cofactor. It depends on Mn(2+) as a cofactor.

The protein resides in the cytoplasm. It carries out the reaction ITP + H2O = IMP + diphosphate + H(+). It catalyses the reaction dITP + H2O = dIMP + diphosphate + H(+). The enzyme catalyses XTP + H2O = XMP + diphosphate + H(+). The catalysed reaction is N(6)-hydroxy-dATP + H2O = N(6)-hydroxy-dAMP + diphosphate + H(+). In terms of biological role, pyrophosphatase that hydrolyzes the non-canonical purine nucleotides inosine triphosphate (ITP), deoxyinosine triphosphate (dITP) as well as 2'-deoxy-N-6-hydroxylaminopurine triphosphate (dHAPTP) and xanthosine 5'-triphosphate (XTP) to their respective monophosphate derivatives. The enzyme does not distinguish between the deoxy- and ribose forms. Probably excludes non-canonical purines from RNA and DNA precursor pools, thus preventing their incorporation into RNA and DNA and avoiding chromosomal lesions. This chain is Inosine triphosphate pyrophosphatase (Itpa), found in Rattus norvegicus (Rat).